The following is a 369-amino-acid chain: MAFDRIEDIIEDYRQGKMVLLVDDEDRENEGDLLLAADCCTAQAISFMAREARGLICLTLTDEHCKSLGLEQMVPSNGSVFATAFTVSIEATTGVTTGISAADRARTVQAAVNPGAVPDDLVQPGHIFPLRARDGGVLTRAGHTEAGCDLARMAGFTPASVIVEVMNDDGTMARRPDLELFAEKHGIRIGTIADLIHYRLSTEHTIVRIGERELPTVHGTFRLFSYEDRIEGGVHMAMVMGDIRREDPTLVRVHVVDPLRDLVGAEYTGPANWTLWAALQRVAEEGCGVVVVLANHESSQALLERIPQLTQPPRQYTRSQSRIYSEVGTGAQILQDLGIGKLRHLGPPLKYAGLTGYDLEVIESIPFPG.

The tract at residues 1-201 (MAFDRIEDII…IADLIHYRLS (201 aa)) is DHBP synthase. Residues 27–28 (RE), D32, 140–144 (RAGHT), and E164 each bind D-ribulose 5-phosphate. E28 contributes to the Mg(2+) binding site. Position 143 (H143) interacts with Mg(2+). The interval 202–369 (TEHTIVRIGE…EVIESIPFPG (168 aa)) is GTP cyclohydrolase II-like.

This sequence in the N-terminal section; belongs to the DHBP synthase family. In the C-terminal section; belongs to the GTP cyclohydrolase II family. Mg(2+) serves as cofactor. It depends on Mn(2+) as a cofactor.

The catalysed reaction is D-ribulose 5-phosphate = (2S)-2-hydroxy-3-oxobutyl phosphate + formate + H(+). It participates in cofactor biosynthesis; riboflavin biosynthesis; 2-hydroxy-3-oxobutyl phosphate from D-ribulose 5-phosphate: step 1/1. Catalyzes the conversion of D-ribulose 5-phosphate to formate and 3,4-dihydroxy-2-butanone 4-phosphate. The chain is 3,4-dihydroxy-2-butanone 4-phosphate synthase (ribB) from Pseudomonas syringae pv. tomato (strain ATCC BAA-871 / DC3000).